Reading from the N-terminus, the 609-residue chain is Dihydroxy-acid dehydratase (609 aa).

A Mg(2+)-binding site is contributed by aspartate 81. Residue cysteine 122 coordinates [2Fe-2S] cluster. Residues aspartate 123 and lysine 124 each contribute to the Mg(2+) site. Lysine 124 carries the N6-carboxylysine modification. Cysteine 195 is a binding site for [2Fe-2S] cluster. Glutamate 491 serves as a coordination point for Mg(2+). The Proton acceptor role is filled by serine 517.

The protein belongs to the IlvD/Edd family. Homodimer. [2Fe-2S] cluster is required as a cofactor. Requires Mg(2+) as cofactor.

It carries out the reaction (2R)-2,3-dihydroxy-3-methylbutanoate = 3-methyl-2-oxobutanoate + H2O. The catalysed reaction is (2R,3R)-2,3-dihydroxy-3-methylpentanoate = (S)-3-methyl-2-oxopentanoate + H2O. It functions in the pathway amino-acid biosynthesis; L-isoleucine biosynthesis; L-isoleucine from 2-oxobutanoate: step 3/4. Its pathway is amino-acid biosynthesis; L-valine biosynthesis; L-valine from pyruvate: step 3/4. Functions in the biosynthesis of branched-chain amino acids. Catalyzes the dehydration of (2R,3R)-2,3-dihydroxy-3-methylpentanoate (2,3-dihydroxy-3-methylvalerate) into 2-oxo-3-methylpentanoate (2-oxo-3-methylvalerate) and of (2R)-2,3-dihydroxy-3-methylbutanoate (2,3-dihydroxyisovalerate) into 2-oxo-3-methylbutanoate (2-oxoisovalerate), the penultimate precursor to L-isoleucine and L-valine, respectively. The protein is Dihydroxy-acid dehydratase of Acinetobacter baumannii (strain ATCC 17978 / DSM 105126 / CIP 53.77 / LMG 1025 / NCDC KC755 / 5377).